Here is a 163-residue protein sequence, read N- to C-terminus: Ribonuclease P protein subunit p25-like protein (163 aa).

Disordered stretches follow at residues 1 to 24 (MEQYRRAGSVELPASSPMPQLPPD) and 126 to 163 (LDPSECGYQPPGAPPGLGSIPSPSCGPRPRRRARDTRS). The span at 153–163 (RPRRRARDTRS) shows a compositional bias: basic residues.

It belongs to the histone-like Alba family.

Its subcellular location is the nucleus. In terms of biological role, may be a component of ribonuclease P or MRP. In Mus musculus (Mouse), this protein is Ribonuclease P protein subunit p25-like protein (Rpp25l).